Reading from the N-terminus, the 385-residue chain is Cytochrome b (385 aa).

Transmembrane regions (helical) follow at residues Met32–Met52, Tyr76–Ala98, Leu113–Cys133, and Phe179–Met199. Heme b-binding residues include His82 and His96. His183 and His197 together coordinate heme b. Position 202 (His202) interacts with a ubiquinone. 4 consecutive transmembrane segments (helical) span residues Phe225–Phe245, Leu289–Asp309, Leu321–Ala341, and Tyr348–Pro368.

It belongs to the cytochrome b family. As to quaternary structure, fungal cytochrome b-c1 complex contains 10 subunits; 3 respiratory subunits, 2 core proteins and 5 low-molecular weight proteins. Cytochrome b-c1 complex is a homodimer. Heme b serves as cofactor.

The protein resides in the mitochondrion inner membrane. Component of the ubiquinol-cytochrome c reductase complex (complex III or cytochrome b-c1 complex) that is part of the mitochondrial respiratory chain. The b-c1 complex mediates electron transfer from ubiquinol to cytochrome c. Contributes to the generation of a proton gradient across the mitochondrial membrane that is then used for ATP synthesis. In Saccharomyces paradoxus (Yeast), this protein is Cytochrome b (COB).